Consider the following 216-residue polypeptide: Octanoyltransferase (216 aa).

Positions 33-212 (AHTPDELWLV…ILSNILGLTA (180 aa)) constitute a BPL/LPL catalytic domain. Residues 72-79 (RGGQVTYH), 139-141 (SLG), and 152-154 (GVA) each bind substrate. Residue Cys170 is the Acyl-thioester intermediate of the active site.

This sequence belongs to the LipB family.

The protein resides in the cytoplasm. The catalysed reaction is octanoyl-[ACP] + L-lysyl-[protein] = N(6)-octanoyl-L-lysyl-[protein] + holo-[ACP] + H(+). It participates in protein modification; protein lipoylation via endogenous pathway; protein N(6)-(lipoyl)lysine from octanoyl-[acyl-carrier-protein]: step 1/2. Catalyzes the transfer of endogenously produced octanoic acid from octanoyl-acyl-carrier-protein onto the lipoyl domains of lipoate-dependent enzymes. Lipoyl-ACP can also act as a substrate although octanoyl-ACP is likely to be the physiological substrate. The chain is Octanoyltransferase from Saccharophagus degradans (strain 2-40 / ATCC 43961 / DSM 17024).